A 178-amino-acid chain; its full sequence is Nascent polypeptide-associated complex subunit alpha (178 aa).

The region spanning serine 20–isoleucine 84 is the NAC-A/B domain. The segment covering alanine 87–alanine 104 has biased composition (low complexity). The interval alanine 87–serine 142 is disordered. Residues glutamate 112–serine 122 show a composition bias toward polar residues. The span at threonine 127 to glycine 139 shows a compositional bias: acidic residues. Residues leucine 140 to serine 178 enclose the UBA domain.

This sequence belongs to the NAC-alpha family. As to quaternary structure, part of the nascent polypeptide-associated complex (NAC), consisting of EGD2 and EGD1. NAC associates with ribosomes via EGD1.

It is found in the cytoplasm. The protein localises to the nucleus. Its function is as follows. Component of the nascent polypeptide-associated complex (NAC), a dynamic component of the ribosomal exit tunnel, protecting the emerging polypeptides from interaction with other cytoplasmic proteins to ensure appropriate nascent protein targeting. The NAC complex also promotes mitochondrial protein import by enhancing productive ribosome interactions with the outer mitochondrial membrane and blocks the inappropriate interaction of ribosomes translating non-secretory nascent polypeptides with translocation sites in the membrane of the endoplasmic reticulum. EGD2 may also be involved in transcription regulation. In Meyerozyma guilliermondii (strain ATCC 6260 / CBS 566 / DSM 6381 / JCM 1539 / NBRC 10279 / NRRL Y-324) (Yeast), this protein is Nascent polypeptide-associated complex subunit alpha (EGD2).